Consider the following 247-residue polypeptide: uncharacterized protein (247 aa).

Residues 200 to 225 (SGKYSELKTKVNDIENDLRTLSSNTN) are a coiled coil.

This is an uncharacterized protein from Acanthamoeba polyphaga (Amoeba).